The following is a 147-amino-acid chain: Putative protein adenylyltransferase MJ1305 (147 aa).

The short motif at 32–46 (GSYARGTAVEYSDVD) is the GSX(10)DXD motif element. 2 residues coordinate Mg(2+): Asp44 and Asp46.

This sequence belongs to the MntA antitoxin family. Mg(2+) serves as cofactor.

It carries out the reaction L-tyrosyl-[protein] + ATP = O-(5'-adenylyl)-L-tyrosyl-[protein] + diphosphate. The catalysed reaction is O-(5'-adenylyl)-L-tyrosyl-[protein] + ATP = O-[5'-(adenylyl-(5'-&gt;3')-adenylyl)]-L-tyrosyl-[protein] + diphosphate. Putative antitoxin component of a putative type VII toxin-antitoxin (TA) system. Its cognate toxin might be MJ1304, which it might AMPylate. This Methanocaldococcus jannaschii (strain ATCC 43067 / DSM 2661 / JAL-1 / JCM 10045 / NBRC 100440) (Methanococcus jannaschii) protein is Putative protein adenylyltransferase MJ1305.